Consider the following 423-residue polypeptide: UPF0229 protein VV1_2091 (423 aa).

The tract at residues 81-111 is disordered; that stretch reads QFITGDKIERPKGGQGGGGAGDGDASADGEG. A compositionally biased stretch (gly residues) spans 93–102; the sequence is GGQGGGGAGD.

The protein belongs to the UPF0229 family.

The polypeptide is UPF0229 protein VV1_2091 (Vibrio vulnificus (strain CMCP6)).